We begin with the raw amino-acid sequence, 657 residues long: Glycogen debranching enzyme (657 aa).

Asp-336 acts as the Nucleophile in catalysis. Glu-371 (proton donor) is an active-site residue. The segment covering Asn-458–Asp-467 has biased composition (basic and acidic residues). Positions Asn-458–Lys-479 are disordered.

It belongs to the glycosyl hydrolase 13 family.

The enzyme catalyses Hydrolysis of (1-&gt;6)-alpha-D-glucosidic linkages to branches with degrees of polymerization of three or four glucose residues in limit dextrin.. Its pathway is glycan degradation; glycogen degradation. Its function is as follows. Removes maltotriose and maltotetraose chains that are attached by 1,6-alpha-linkage to the limit dextrin main chain, generating a debranched limit dextrin. The polypeptide is Glycogen debranching enzyme (Escherichia coli (strain SE11)).